Consider the following 307-residue polypeptide: UDP-N-acetylenolpyruvoylglucosamine reductase (307 aa).

The FAD-binding PCMH-type domain maps to 33-197 (TGGNADFYIT…LEAAFTLAPG (165 aa)). Residue Arg-176 is part of the active site. Catalysis depends on Ser-226, which acts as the Proton donor. Glu-296 is an active-site residue.

It belongs to the MurB family. FAD is required as a cofactor.

It localises to the cytoplasm. It carries out the reaction UDP-N-acetyl-alpha-D-muramate + NADP(+) = UDP-N-acetyl-3-O-(1-carboxyvinyl)-alpha-D-glucosamine + NADPH + H(+). The protein operates within cell wall biogenesis; peptidoglycan biosynthesis. In terms of biological role, cell wall formation. The chain is UDP-N-acetylenolpyruvoylglucosamine reductase from Staphylococcus aureus (strain NCTC 8325 / PS 47).